We begin with the raw amino-acid sequence, 104 residues long: Large ribosomal subunit protein bL21 (104 aa).

Belongs to the bacterial ribosomal protein bL21 family. Part of the 50S ribosomal subunit. Contacts protein L20.

Its function is as follows. This protein binds to 23S rRNA in the presence of protein L20. The protein is Large ribosomal subunit protein bL21 of Helicobacter pylori (strain P12).